A 181-amino-acid chain; its full sequence is Adenylate kinase (181 aa).

10 to 15 is a binding site for ATP; the sequence is GAGKGT. The segment at 30-59 is NMP; the sequence is STGDLFRANIGEGTPLGIEAKQYIDAGKLV. AMP contacts are provided by residues Thr-31, Arg-36, 57–59, 85–88, and Gln-92; these read KLV and GFPR. Residues 126–132 are LID; that stretch reads SRGRADD. Arg-127 is a binding site for ATP. 2 residues coordinate AMP: Arg-129 and Arg-140. Residue Gly-166 participates in ATP binding.

The protein belongs to the adenylate kinase family. In terms of assembly, monomer.

The protein localises to the cytoplasm. The catalysed reaction is AMP + ATP = 2 ADP. Its pathway is purine metabolism; AMP biosynthesis via salvage pathway; AMP from ADP: step 1/1. Its function is as follows. Catalyzes the reversible transfer of the terminal phosphate group between ATP and AMP. Plays an important role in cellular energy homeostasis and in adenine nucleotide metabolism. The chain is Adenylate kinase from Corynebacterium glutamicum (strain R).